We begin with the raw amino-acid sequence, 419 residues long: L-rhamnose isomerase (419 aa).

Mn(2+) contacts are provided by histidine 262, aspartate 294, and aspartate 296.

Belongs to the rhamnose isomerase family. In terms of assembly, homotetramer. Mn(2+) serves as cofactor.

Its subcellular location is the cytoplasm. It carries out the reaction L-rhamnopyranose = L-rhamnulose. It participates in carbohydrate degradation; L-rhamnose degradation; glycerone phosphate from L-rhamnose: step 1/3. Its function is as follows. Catalyzes the interconversion of L-rhamnose and L-rhamnulose. The protein is L-rhamnose isomerase of Escherichia coli O17:K52:H18 (strain UMN026 / ExPEC).